The chain runs to 35 residues: Photosystem II reaction center protein T (35 aa).

The helical transmembrane segment at 3–23 (ALVYTFLLVSTLGIIFFAIFF) threads the bilayer.

Belongs to the PsbT family. PSII is composed of 1 copy each of membrane proteins PsbA, PsbB, PsbC, PsbD, PsbE, PsbF, PsbH, PsbI, PsbJ, PsbK, PsbL, PsbM, PsbT, PsbY, PsbZ, Psb30/Ycf12, at least 3 peripheral proteins of the oxygen-evolving complex and a large number of cofactors. It forms dimeric complexes.

It is found in the plastid. The protein localises to the chloroplast thylakoid membrane. Its function is as follows. Found at the monomer-monomer interface of the photosystem II (PS II) dimer, plays a role in assembly and dimerization of PSII. PSII is a light-driven water plastoquinone oxidoreductase, using light energy to abstract electrons from H(2)O, generating a proton gradient subsequently used for ATP formation. This chain is Photosystem II reaction center protein T, found in Nelumbo lutea (American lotus).